A 541-amino-acid polypeptide reads, in one-letter code: Propionyl-CoA carboxylase beta chain, mitochondrial (541 aa).

Residues 1 to 28 (MAAAIRIRAVAAGARLSVLNCGLGITTR) constitute a mitochondrion transit peptide. The 259-residue stretch at 34 to 292 (PVSVKERIDN…SSQDPAPIRE (259 aa)) folds into the CoA carboxyltransferase N-terminal domain. The interval 34 to 535 (PVSVKERIDN…SKKVHRPWRK (502 aa)) is carboxyltransferase. The residue at position 73 (Ser-73) is a Phosphoserine. N6-acetyllysine; alternate is present on Lys-101. Lys-101 carries the N6-succinyllysine; alternate modification. Lys-250 carries the N6-succinyllysine modification. Residues 296-535 (PSDRLVPELD…SKKVHRPWRK (240 aa)) form the CoA carboxyltransferase C-terminal domain. The acyl-CoA binding stretch occupies residues 327-360 (DEREFFEIMPSYAKNIVVGFARMNGRTVGIVGNQ). An N6-acetyllysine; alternate mark is found at Lys-476 and Lys-491. N6-succinyllysine; alternate is present on residues Lys-476 and Lys-491.

It belongs to the AccD/PCCB family. The holoenzyme is a dodecamer composed of 6 PCCA/alpha subunits and 6 PCCB/beta subunits. In terms of tissue distribution, broadly expressed. Most abundantly expressed in the kidney, liver, small intestine and stomach.

It is found in the mitochondrion matrix. It carries out the reaction propanoyl-CoA + hydrogencarbonate + ATP = (S)-methylmalonyl-CoA + ADP + phosphate + H(+). The catalysed reaction is butanoyl-CoA + hydrogencarbonate + ATP = (2S)-ethylmalonyl-CoA + ADP + phosphate + H(+). Its pathway is metabolic intermediate metabolism; propanoyl-CoA degradation; succinyl-CoA from propanoyl-CoA: step 1/3. In terms of biological role, this is one of the 2 subunits of the biotin-dependent propionyl-CoA carboxylase (PCC), a mitochondrial enzyme involved in the catabolism of odd chain fatty acids, branched-chain amino acids isoleucine, threonine, methionine, and valine and other metabolites. Propionyl-CoA carboxylase catalyzes the carboxylation of propionyl-CoA/propanoyl-CoA to D-methylmalonyl-CoA/(S)-methylmalonyl-CoA. Within the holoenzyme, the alpha subunit catalyzes the ATP-dependent carboxylation of the biotin carried by the biotin carboxyl carrier (BCC) domain, while the beta subunit then transfers the carboxyl group from carboxylated biotin to propionyl-CoA. Propionyl-CoA carboxylase also significantly acts on butyryl-CoA/butanoyl-CoA, which is converted to ethylmalonyl-CoA/(2S)-ethylmalonyl-CoA. Other alternative minor substrates include (2E)-butenoyl-CoA/crotonoyl-CoA. The sequence is that of Propionyl-CoA carboxylase beta chain, mitochondrial from Mus musculus (Mouse).